The chain runs to 280 residues: Ribonuclease P protein subunit p38 (280 aa).

Ala2 bears the N-acetylalanine mark. Phosphoserine occurs at positions 12, 221, and 230. Residues 202–227 (WLPDRTQGPTDSLETEPSESQDNEIL) form a disordered region. Residues 214–226 (LETEPSESQDNEI) are compositionally biased toward acidic residues. A disordered region spans residues 254–280 (QPLKIKKLIPNPSKIRKPPKSKKSISK). The span at 267–280 (KIRKPPKSKKSISK) shows a compositional bias: basic residues.

It belongs to the eukaryotic ribosomal protein eL8 family. Component of nuclear RNase P and RNase MRP ribonucleoproteins. RNase P consists of a catalytic RNA moiety and about 10 protein subunits; POP1, POP4, POP5, POP7, RPP14, RPP21, RPP25, RPP30, RPP38 and RPP40. Within the RNase P complex, POP1, POP7 and RPP25 form the 'finger' subcomplex, POP5, RPP14, RPP40 and homodimeric RPP30 form the 'palm' subcomplex, and RPP21, POP4 and RPP38 form the 'wrist' subcomplex. All subunits of the RNase P complex interact with the catalytic RNA. Several subunits of RNase P are also part of the RNase MRP complex. RNase MRP consists of a catalytic RNA moiety and about 8 protein subunits; POP1, POP7, RPP25, RPP30, RPP38, RPP40 and possibly also POP4 and POP5.

Its subcellular location is the nucleus. It is found in the nucleolus. Functionally, component of ribonuclease P, a ribonucleoprotein complex that generates mature tRNA molecules by cleaving their 5'-ends. Also a component of the MRP ribonuclease complex, which cleaves pre-rRNA sequences. In Mus musculus (Mouse), this protein is Ribonuclease P protein subunit p38 (Rpp38).